Reading from the N-terminus, the 198-residue chain is Recombination protein RecR (198 aa).

The C4-type zinc-finger motif lies at 57–72 (CSICCNLSEHDPCPIC). A Toprim domain is found at 80 to 175 (NIVCVVETPQ…KVTRLGYGLP (96 aa)).

The protein belongs to the RecR family.

Its function is as follows. May play a role in DNA repair. It seems to be involved in an RecBC-independent recombinational process of DNA repair. It may act with RecF and RecO. The sequence is that of Recombination protein RecR from Endomicrobium trichonymphae.